A 156-amino-acid chain; its full sequence is ATP synthase subunit b (156 aa).

Residues L7–P27 traverse the membrane as a helical segment.

The protein belongs to the ATPase B chain family. In terms of assembly, F-type ATPases have 2 components, F(1) - the catalytic core - and F(0) - the membrane proton channel. F(1) has five subunits: alpha(3), beta(3), gamma(1), delta(1), epsilon(1). F(0) has three main subunits: a(1), b(2) and c(10-14). The alpha and beta chains form an alternating ring which encloses part of the gamma chain. F(1) is attached to F(0) by a central stalk formed by the gamma and epsilon chains, while a peripheral stalk is formed by the delta and b chains.

It is found in the cell inner membrane. Functionally, f(1)F(0) ATP synthase produces ATP from ADP in the presence of a proton or sodium gradient. F-type ATPases consist of two structural domains, F(1) containing the extramembraneous catalytic core and F(0) containing the membrane proton channel, linked together by a central stalk and a peripheral stalk. During catalysis, ATP synthesis in the catalytic domain of F(1) is coupled via a rotary mechanism of the central stalk subunits to proton translocation. Component of the F(0) channel, it forms part of the peripheral stalk, linking F(1) to F(0). The chain is ATP synthase subunit b from Actinobacillus pleuropneumoniae serotype 5b (strain L20).